We begin with the raw amino-acid sequence, 446 residues long: Methylenetetrahydrofolate--tRNA-(uracil-5-)-methyltransferase TrmFO (446 aa).

An FAD-binding site is contributed by 9–14; the sequence is GGGMAG.

It belongs to the MnmG family. TrmFO subfamily. FAD is required as a cofactor.

It is found in the cytoplasm. It carries out the reaction uridine(54) in tRNA + (6R)-5,10-methylene-5,6,7,8-tetrahydrofolate + NADH + H(+) = 5-methyluridine(54) in tRNA + (6S)-5,6,7,8-tetrahydrofolate + NAD(+). The catalysed reaction is uridine(54) in tRNA + (6R)-5,10-methylene-5,6,7,8-tetrahydrofolate + NADPH + H(+) = 5-methyluridine(54) in tRNA + (6S)-5,6,7,8-tetrahydrofolate + NADP(+). In terms of biological role, catalyzes the folate-dependent formation of 5-methyl-uridine at position 54 (M-5-U54) in all tRNAs. The sequence is that of Methylenetetrahydrofolate--tRNA-(uracil-5-)-methyltransferase TrmFO from Ruegeria sp. (strain TM1040) (Silicibacter sp.).